The chain runs to 127 residues: Large ribosomal subunit protein bL12 (127 aa).

It belongs to the bacterial ribosomal protein bL12 family. Homodimer. Part of the ribosomal stalk of the 50S ribosomal subunit. Forms a multimeric L10(L12)X complex, where L10 forms an elongated spine to which 2 to 4 L12 dimers bind in a sequential fashion. Binds GTP-bound translation factors.

Functionally, forms part of the ribosomal stalk which helps the ribosome interact with GTP-bound translation factors. Is thus essential for accurate translation. This chain is Large ribosomal subunit protein bL12, found in Streptomyces coelicolor (strain ATCC BAA-471 / A3(2) / M145).